A 947-amino-acid chain; its full sequence is MDVAESPELEPHSPDEEQPALSDDDILRESGSEQDLDGAGERASDLEEEENATRVQSQEEIHSDEEDQASEPKSQDQDSEAHELSRGPAGSPCEEGDDAEEDGTSDLRDEASSVTRELDEHELDYDEEVPEEPAPAAQEEEAEKAGAEEEEEKGEGAPGEEGKPDVQSVGEKEPTEAAKEKKKEDDDGEIDDGEIDDDDLEEGEVKDPSDRKVRPRPTCRFFMKGNCTWGMNCRFIHPGVNDKGNYSLITKAEPFPPNGAPPLGPHPLMPANPWGGPVVDEILPPPPPEPPTESAWERGLRHAKEVLKKATIRKEQEPDFEEKRFTVTIGEDDREFDKENEVFRDWNSRVPRDVRDTTLEPYADPYYDYEIERFWRGGQYENFRVQYTEAEPYHNYRDRERERERENRQRERERDRERDRERERRQRERERERERERDKERQRRKEEWERERAKRDEKDRQHRDRDRDKDRDKDKEKPKPRSPQPPSRQAEPPKKETASVGPQVKRADEWKDPWRRSKSPKKKLGVSVSPSRARRRRKTSASSASASNSSRSSSRSSSYSGSGSSRSRSRSSSYSSYSSRSSRRSSFSGSRSRSRSFSSSPSPSPTPSPHRPPVRTKGEPAPPPGKAGEKSIKKPAPPPAPPQATKTTAPAPEPAKPGDLREARRKERQTRTPPRRRTLSGSGSGSGSSYSGSSSRSRSLSVSSVSSVSSATSSSSSVHSVDSDDMYADLASPVSSASSRSPTPAQTKKERGKSKKEDGVREEKRKRDPSAQPPKSSKAPAGGKASQQAAAPQQAAPGQPQQGSFVAHKEIKLTLLNKAAEKGSRKRYEPSDKDRQSPPAKKANLSPDRGSRDRKSGGRMGSPKPERQRGQNAKAPAAPADRKRPLSPQSKSSSKVTSVPGKATDTATAGTKSGKASTLSRREELLKQLKAVEDAIARKRAKIPGKV.

Met1 carries the N-acetylmethionine modification. Disordered regions lie at residues 1–218, 275–295, and 387–921; these read MDVA…PRPT, GGPVVDEILPPPPPEPPTESA, and YTEA…TLSR. A phosphoserine mark is found at Ser6, Ser32, Ser44, Ser57, Ser63, Ser70, Ser74, Ser79, and Ser91. Residues 73–85 are compositionally biased toward basic and acidic residues; the sequence is KSQDQDSEAHELS. The span at 94-104 shows a compositional bias: acidic residues; it reads EEGDDAEEDGT. Residue Thr104 is modified to Phosphothreonine. Phosphoserine is present on residues Ser105 and Ser113. The segment covering 105 to 119 has biased composition (basic and acidic residues); it reads SDLRDEASSVTRELD. Composition is skewed to acidic residues over residues 120–131 and 138–153; these read EHELDYDEEVPE and QEEEAEKAGAEEEEEK. A compositionally biased stretch (basic and acidic residues) spans 160–185; it reads EEGKPDVQSVGEKEPTEAAKEKKKED. Phosphoserine is present on Ser168. The span at 186–202 shows a compositional bias: acidic residues; sequence DDGEIDDGEIDDDDLEE. A compositionally biased stretch (basic and acidic residues) spans 203-212; it reads GEVKDPSDRK. The C3H1-type zinc finger occupies 214-240; that stretch reads RPRPTCRFFMKGNCTWGMNCRFIHPGV. Residues 391–479 are compositionally biased toward basic and acidic residues; the sequence is EPYHNYRDRE…DRDKDKEKPK (89 aa). The residue at position 482 (Ser482) is a Phosphoserine. Lys505 participates in a covalent cross-link: Glycyl lysine isopeptide (Lys-Gly) (interchain with G-Cter in SUMO2). The segment covering 505-515 has biased composition (basic and acidic residues); that stretch reads KRADEWKDPWR. A phosphoserine mark is found at Ser527, Ser529, and Ser531. Low complexity predominate over residues 540–601; it reads SASSASASNS…SRSRSFSSSP (62 aa). Residues 602–611 are compositionally biased toward pro residues; that stretch reads SPSPTPSPHR. Glycyl lysine isopeptide (Lys-Gly) (interchain with G-Cter in SUMO2) cross-links involve residues Lys617 and Lys656. Basic and acidic residues predominate over residues 656–665; the sequence is KPGDLREARR. Composition is skewed to low complexity over residues 687 to 720 and 731 to 745; these read GSSYSGSSSRSRSLSVSSVSSVSSATSSSSSVHS and ASPVSSASSRSPTPA. A compositionally biased stretch (basic and acidic residues) spans 755–769; it reads KKEDGVREEKRKRDP. Low complexity predominate over residues 773–804; it reads PPKSSKAPAGGKASQQAAAPQQAAPGQPQQGS. An N6-acetyllysine modification is found at Lys809. Lys812 is covalently cross-linked (Glycyl lysine isopeptide (Lys-Gly) (interchain with G-Cter in SUMO2)). Positions 819-836 are enriched in basic and acidic residues; that stretch reads AAEKGSRKRYEPSDKDRQ. A phosphoserine mark is found at Ser837, Ser846, Ser862, Ser887, and Ser890. Low complexity predominate over residues 887-918; the sequence is SPQSKSSSKVTSVPGKATDTATAGTKSGKAST. Residue Lys902 forms a Glycyl lysine isopeptide (Lys-Gly) (interchain with G-Cter in SUMO2) linkage. The stretch at 915–944 forms a coiled coil; sequence KASTLSRREELLKQLKAVEDAIARKRAKIP.

As to quaternary structure, interacts with ZFC3H1 in a RNase-insensitive manner.

The protein localises to the nucleus. This Rattus norvegicus (Rat) protein is Zinc finger CCCH domain-containing protein 18 (Zc3h18).